Here is a 667-residue protein sequence, read N- to C-terminus: Heat shock protein DDB_G0283913 (667 aa).

Transmembrane regions (helical) follow at residues 2-22 and 224-244; these read FVGTLVIIICTTLIIIIKKIL and MFICDMSFSLASIIVYVLNEL. The stretch at 18 to 82 forms a coiled coil; sequence IKKILKRKKE…ELAKKLNCYI (65 aa). Positions 432-478 are disordered; the sequence is IDDTIQDNDKSGSEVSTPTISSSSSSPLQPIIKDEKDDNIENKSDEA. The segment covering 444–457 has biased composition (low complexity); the sequence is SEVSTPTISSSSSS. Over residues 463-477 the composition is skewed to basic and acidic residues; it reads IKDEKDDNIENKSDE. The region spanning 551–667 is the sHSP domain; it reads MVFSSGFKPF…VITFKFEKIG (117 aa).

Belongs to the small heat shock protein (HSP20) family.

The protein resides in the membrane. The polypeptide is Heat shock protein DDB_G0283913 (Dictyostelium discoideum (Social amoeba)).